The chain runs to 451 residues: Secreted RxLR effector protein 111 (451 aa).

Residues 1–19 (MRGTLATALLLVASCRIAA) form the signal peptide. A RxLR-dEER motif is present at residues 48–69 (RFLRDNREQRVALALTAANESR). Asparagine 66 carries an N-linked (GlcNAc...) asparagine glycan. Composition is skewed to polar residues over residues 175–184 (RKTLSKTQFK) and 413–426 (SPAS…QRTG). 2 disordered regions span residues 175 to 194 (RKTL…STKR) and 404 to 451 (IPLQ…NKHA). Basic and acidic residues predominate over residues 437–451 (PERDSFRHIESNKHA).

Belongs to the RxLR effector family.

Its subcellular location is the secreted. The protein resides in the host nucleus. In terms of biological role, secreted effector that acts as an elicitor that induces cell death in host plant cells. This is Secreted RxLR effector protein 111 from Plasmopara viticola (Downy mildew of grapevine).